Consider the following 594-residue polypeptide: uncharacterized protein (594 aa).

The presence of the two linear plasmids, termed pGKL1 and pGKL2, in strains of Kluyveromyces lactis confers the killer phenotype to the host cell, by promoting the secretion of a toxin able to inhibit the growth of sensitive strains. This is an uncharacterized protein from Kluyveromyces lactis (strain ATCC 8585 / CBS 2359 / DSM 70799 / NBRC 1267 / NRRL Y-1140 / WM37) (Yeast).